The following is a 104-amino-acid chain: Integration host factor subunit beta (104 aa).

This sequence belongs to the bacterial histone-like protein family. As to quaternary structure, heterodimer of an alpha and a beta chain.

This protein is one of the two subunits of integration host factor, a specific DNA-binding protein that functions in genetic recombination as well as in transcriptional and translational control. The sequence is that of Integration host factor subunit beta (ihfB) from Neisseria gonorrhoeae.